An 87-amino-acid chain; its full sequence is MGSRLPPAALTLKQFLVRQQVLGLYRKILRSVRQIPDAADQRYMQEWAREEFRRNKGATEEIAIRMMITHGQRQLQELERALHLAKS.

Residues 1-19 (MGSRLPPAALTLKQFLVRQ) constitute a mitochondrion transit peptide.

The protein belongs to the complex I LYR family.

It is found in the mitochondrion. In terms of biological role, involved in efficient integration of the N-module into mitochondrial respiratory chain complex I. The polypeptide is LYR motif-containing protein 2 (lyrm2) (Xenopus tropicalis (Western clawed frog)).